Consider the following 159-residue polypeptide: Ribosomal RNA large subunit methyltransferase H (159 aa).

Residues Leu-76, Gly-108, and 127-132 contribute to the S-adenosyl-L-methionine site; that span reads FSPMTF.

The protein belongs to the RNA methyltransferase RlmH family. Homodimer.

It is found in the cytoplasm. The enzyme catalyses pseudouridine(1915) in 23S rRNA + S-adenosyl-L-methionine = N(3)-methylpseudouridine(1915) in 23S rRNA + S-adenosyl-L-homocysteine + H(+). Specifically methylates the pseudouridine at position 1915 (m3Psi1915) in 23S rRNA. In Alkaliphilus oremlandii (strain OhILAs) (Clostridium oremlandii (strain OhILAs)), this protein is Ribosomal RNA large subunit methyltransferase H.